An 81-amino-acid chain; its full sequence is Costars family protein ABRACL (81 aa).

Belongs to the costars family.

This is Costars family protein ABRACL (abracl) from Xenopus tropicalis (Western clawed frog).